Consider the following 350-residue polypeptide: Protein pelota homolog (350 aa).

The protein belongs to the eukaryotic release factor 1 family. Pelota subfamily. Monomer. A divalent metal cation is required as a cofactor.

The protein resides in the cytoplasm. In terms of biological role, may function in recognizing stalled ribosomes, interact with stem-loop structures in stalled mRNA molecules, and effect endonucleolytic cleavage of the mRNA. May play a role in the release non-functional ribosomes and degradation of damaged mRNAs. Has endoribonuclease activity. This Methanosarcina mazei (strain ATCC BAA-159 / DSM 3647 / Goe1 / Go1 / JCM 11833 / OCM 88) (Methanosarcina frisia) protein is Protein pelota homolog.